Consider the following 471-residue polypeptide: UDP-N-acetylmuramate--L-alanine ligase (471 aa).

114 to 120 (GTHGKTT) is an ATP binding site.

This sequence belongs to the MurCDEF family.

The protein resides in the cytoplasm. It carries out the reaction UDP-N-acetyl-alpha-D-muramate + L-alanine + ATP = UDP-N-acetyl-alpha-D-muramoyl-L-alanine + ADP + phosphate + H(+). It functions in the pathway cell wall biogenesis; peptidoglycan biosynthesis. In terms of biological role, cell wall formation. The sequence is that of UDP-N-acetylmuramate--L-alanine ligase from Rhizobium johnstonii (strain DSM 114642 / LMG 32736 / 3841) (Rhizobium leguminosarum bv. viciae).